Reading from the N-terminus, the 128-residue chain is Probable 4-amino-4-deoxy-L-arabinose-phosphoundecaprenol flippase subunit ArnF (128 aa).

The Cytoplasmic portion of the chain corresponds to 1 to 2 (MG). Residues 3–23 (LIWGLFSVIIASVAQLSLGFA) traverse the membrane as a helical segment. Topologically, residues 24–35 (ASHLPPMTHLWD) are periplasmic. The chain crosses the membrane as a helical span at residues 36 to 56 (FIAALLAFGLDARILLLGLLG). Residues 57–75 (YLLSVFCWYKTLHKLALSK) lie on the Cytoplasmic side of the membrane. Residues 76 to 96 (AYALLSMSYVLVWIASMVLPG) form a helical membrane-spanning segment. The Periplasmic segment spans residues 97-100 (REGT). The helical transmembrane segment at 101-121 (FSLKALLGVACIMSGLMLIFL) threads the bilayer. The Cytoplasmic segment spans residues 122–128 (PTTKQRY).

Belongs to the ArnF family. Heterodimer of ArnE and ArnF.

The protein resides in the cell inner membrane. It participates in bacterial outer membrane biogenesis; lipopolysaccharide biosynthesis. Its function is as follows. Translocates 4-amino-4-deoxy-L-arabinose-phosphoundecaprenol (alpha-L-Ara4N-phosphoundecaprenol) from the cytoplasmic to the periplasmic side of the inner membrane. The protein is Probable 4-amino-4-deoxy-L-arabinose-phosphoundecaprenol flippase subunit ArnF of Shigella flexneri serotype 5b (strain 8401).